The chain runs to 349 residues: Phenylalanine--tRNA ligase alpha subunit (349 aa).

Mg(2+) is bound at residue Glu-258.

This sequence belongs to the class-II aminoacyl-tRNA synthetase family. Phe-tRNA synthetase alpha subunit type 1 subfamily. In terms of assembly, tetramer of two alpha and two beta subunits. Requires Mg(2+) as cofactor.

The protein resides in the cytoplasm. It carries out the reaction tRNA(Phe) + L-phenylalanine + ATP = L-phenylalanyl-tRNA(Phe) + AMP + diphosphate + H(+). This chain is Phenylalanine--tRNA ligase alpha subunit, found in Rickettsia canadensis (strain McKiel).